Reading from the N-terminus, the 1108-residue chain is Retinal guanylyl cyclase 2 (1108 aa).

An N-terminal signal peptide occupies residues 1–50 (MFLGLGRFSRLVLWFAAFRKLLGHHGLASAKFLWCLCLLSVMSLPQQVWT). Over 51–467 (LPYKIGVVGP…KICHGGIDPA (417 aa)) the chain is Extracellular. Cysteine 104 and cysteine 132 are disulfide-bonded. The chain crosses the membrane as a helical span at residues 468-490 (FAMMVCLTLLIALLSINGFAYFI). Residues 491–1108 (RRRINKIQLI…AERQLVRNKP (618 aa)) are Cytoplasmic-facing. Residues 532 to 812 (FQITSEVQSG…DEIFNQFKTF (281 aa)) enclose the Protein kinase domain. The region spanning 884–1014 (TLYFSDIVGF…DTVNTASRME (131 aa)) is the Guanylate cyclase domain.

The protein belongs to the adenylyl cyclase class-4/guanylyl cyclase family. Homodimer. Interacts with RD3; promotes the exit of GUCY2F from the endoplasmic reticulum and its trafficking to the photoreceptor outer segments. In terms of processing, there are 9 conserved cysteine residues in sensory guanylate cyclases, 6 in the extracellular domain, which may be involved in intra- or interchain disulfide bonds. Retina. Localized exclusively in the outer nuclear layer and inner segments of the rod and cone photoreceptor cells.

It is found in the photoreceptor outer segment membrane. The catalysed reaction is GTP = 3',5'-cyclic GMP + diphosphate. Activated by GUCA1B when free calcium ions concentration is low, and inhibited by GUCA1B when free calcium ions concentration is high. Inhibited by RD3. Responsible for the synthesis of cyclic GMP (cGMP) in rods and cones of photoreceptors. Plays an essential role in phototransduction, by mediating cGMP replenishment. May also participate in the trafficking of membrane-asociated proteins to the photoreceptor outer segment membrane. This is Retinal guanylyl cyclase 2 (GUCY2F) from Homo sapiens (Human).